The chain runs to 1010 residues: Ubiquitin conjugation factor E4 (1010 aa).

Residues 13-70 form a disordered region; that stretch reads AKLQQTNSEANSSKEPKESNIAPEPKKPDLKKRFIGSKATTSNSEQKEISPPVTSGAP. The span at 24-44 shows a compositional bias: basic and acidic residues; it reads SSKEPKESNIAPEPKKPDLKK. Residues 930–1004 form the U-box domain; the sequence is DIPDYFLDPL…NTFLKSKRNK (75 aa).

This sequence belongs to the ubiquitin conjugation factor E4 family.

Its subcellular location is the cytoplasm. The protein resides in the nucleus. It functions in the pathway protein modification; protein ubiquitination. Its function is as follows. E4 ubiquitin chain-elongation enzyme specifically involved in polyubiquitin chain assembly. Binds to cdc48 and elongates mono- and diubiquitinated ERAD substrates presented by the ufd1-npl4-cdc48 (UNC) AAA ATPase complex to a chain length of 4 to 6 ubiquitin moieties. Delivers these polyubiquitinated substrates to downstream ERAD components, which target them to the proteasome. Enhances ubiquitination at 'Lys-48', but not at 'Lys-29' of the Ub moiety. The protein is Ubiquitin conjugation factor E4 (ufd2) of Schizosaccharomyces pombe (strain 972 / ATCC 24843) (Fission yeast).